The following is a 429-amino-acid chain: L-cysteine:1D-myo-inositol 2-amino-2-deoxy-alpha-D-glucopyranoside ligase (429 aa).

A Zn(2+)-binding site is contributed by cysteine 60. Residues 60–63 (CGIT), threonine 75, and 98–100 (NIT) contribute to the L-cysteinyl-5'-AMP site. A 'HIGH' region motif is present at residues 62 to 72 (ITPYDATHLGH). The short motif at 204-209 (ERGGDP) is the 'ERGGDP' region element. Tryptophan 244 contributes to the L-cysteinyl-5'-AMP binding site. Zn(2+) is bound at residue cysteine 248. 266–268 (GSD) provides a ligand contact to L-cysteinyl-5'-AMP. Residue histidine 273 coordinates Zn(2+). Isoleucine 300 provides a ligand contact to L-cysteinyl-5'-AMP. The short motif at 306–310 (KMSKS) is the 'KMSKS' region element.

The protein belongs to the class-I aminoacyl-tRNA synthetase family. MshC subfamily. Monomer. Zn(2+) serves as cofactor.

The catalysed reaction is 1D-myo-inositol 2-amino-2-deoxy-alpha-D-glucopyranoside + L-cysteine + ATP = 1D-myo-inositol 2-(L-cysteinylamino)-2-deoxy-alpha-D-glucopyranoside + AMP + diphosphate + H(+). Functionally, catalyzes the ATP-dependent condensation of GlcN-Ins and L-cysteine to form L-Cys-GlcN-Ins. This chain is L-cysteine:1D-myo-inositol 2-amino-2-deoxy-alpha-D-glucopyranoside ligase, found in Mycolicibacterium vanbaalenii (strain DSM 7251 / JCM 13017 / BCRC 16820 / KCTC 9966 / NRRL B-24157 / PYR-1) (Mycobacterium vanbaalenii).